We begin with the raw amino-acid sequence, 72 residues long: NAD(P)H-quinone oxidoreductase subunit O (72 aa).

Belongs to the complex I NdhO subunit family. NDH-1 can be composed of about 15 different subunits; different subcomplexes with different compositions have been identified which probably have different functions.

The protein resides in the cellular thylakoid membrane. It catalyses the reaction a plastoquinone + NADH + (n+1) H(+)(in) = a plastoquinol + NAD(+) + n H(+)(out). The enzyme catalyses a plastoquinone + NADPH + (n+1) H(+)(in) = a plastoquinol + NADP(+) + n H(+)(out). NDH-1 shuttles electrons from an unknown electron donor, via FMN and iron-sulfur (Fe-S) centers, to quinones in the respiratory and/or the photosynthetic chain. The immediate electron acceptor for the enzyme in this species is believed to be plastoquinone. Couples the redox reaction to proton translocation, and thus conserves the redox energy in a proton gradient. Cyanobacterial NDH-1 also plays a role in inorganic carbon-concentration. The polypeptide is NAD(P)H-quinone oxidoreductase subunit O (Rippkaea orientalis (strain PCC 8801 / RF-1) (Cyanothece sp. (strain PCC 8801))).